We begin with the raw amino-acid sequence, 794 residues long: Protein smoothened (794 aa).

A signal peptide spans 1 to 15; it reads GPCWLWALALGLALG. The Extracellular portion of the chain corresponds to 16-201; it reads PRRCPAAPLN…FTETEHREMH (186 aa). A glycan (N-linked (GlcNAc...) asparagine) is linked at Asn25. 5 cysteine pairs are disulfide-bonded: Cys34–Cys148, Cys40–Cys104, Cys48–Cys97, Cys88–Cys124, and Cys117–Cys139. The FZ domain occupies 35–151; the sequence is RRPAACERLR…DRFPEGCPNE (117 aa). Position 65 (Asp65) interacts with cholesterol. The N-linked (GlcNAc...) asparagine glycan is linked to Asn158. 2 cysteine pairs are disulfide-bonded: Cys163–Cys183 and Cys187–Cys264. Residues 202 to 222 traverse the membrane as a helical segment; the sequence is VYIAFSSVTISCTFFTLATFV. Topologically, residues 223–231 are cytoplasmic; it reads ADWRNSNRY. A helical membrane pass occupies residues 232 to 252; sequence PAVILFYVNACFFVGSIGCVA. Over 253 to 283 the chain is Extracellular; the sequence is QFMDGARDEIVCRADGTMRLGEPTSNETLSC. An N-linked (GlcNAc...) asparagine glycan is attached at Asn278. The cysteines at positions 283 and 359 are disulfide-linked. A helical membrane pass occupies residues 284–304; sequence VIIFVIVYYSLMSGVIWFVML. The Cytoplasmic portion of the chain corresponds to 305-327; it reads TYAWHTSFKALGTTYQPLLGKTS. The helical transmembrane segment at 328–348 threads the bilayer; it reads YFHLITWSIPFVLTVAILAVA. Residues 349–371 lie on the Extracellular side of the membrane; that stretch reads QVDGDSVSGICFVGYKNYRYRAG. Tyr363 is a cholesterol binding site. Residues 372-392 traverse the membrane as a helical segment; it reads FVLAPIGLVLIVGGYFLIRGV. The Cytoplasmic portion of the chain corresponds to 393–420; the sequence is MTLFSIKSNHPGLLSEKAASKINETMLR. A helical membrane pass occupies residues 421-440; it reads LGIFGFLAFGFVFITFGCHF. At 441-493 the chain is on the extracellular side; that stretch reads YDFFNQAEWERSFREYVLCEANVTIATQTNKPIPECEIKNRPSLLVEKINLFA. Cys459 and Cys476 are joined by a disulfide. Asn462 carries N-linked (GlcNAc...) asparagine glycosylation. Residues 494 to 514 traverse the membrane as a helical segment; that stretch reads MFGTGISMSTWVWTKATLLIW. At 515–794 the chain is on the cytoplasmic side; that stretch reads KRTWCRLTGQ…AELLDADLDF (280 aa). Disordered regions lie at residues 634 to 655 and 723 to 773; these read LQKR…CPER and PFCP…RAGL. Over residues 637 to 647 the composition is skewed to basic residues; it reads RSRKKKRRKKK.

It belongs to the G-protein coupled receptor Fz/Smo family. As to quaternary structure, homodimer.

Its subcellular location is the cell membrane. The protein resides in the cell projection. It localises to the cilium. In terms of biological role, g protein-coupled receptor which associates with the patched protein (PTCH) to transduce hedgehog protein signaling. Binding of sonic hedgehog (SHH) to its receptor patched prevents inhibition of smoothened (SMO) by patched. When active, SMO binds to and sequesters protein kinase A catalytic subunit PRKACA at the cell membrane, preventing PRKACA-mediated phosphorylation of GLI transcription factors which releases the GLI proteins from PRKACA-mediated inhibition and allows for transcriptional activation of hedgehog pathway target genes. This is Protein smoothened (SMO) from Gallus gallus (Chicken).